The primary structure comprises 2089 residues: Mediator of DNA damage checkpoint protein 1 (2089 aa).

A compositionally biased stretch (acidic residues) spans 1-19 (MEDTQAIDWDVEEEEETEQ). A disordered region spans residues 1–22 (MEDTQAIDWDVEEEEETEQSSE). Residues 1 to 150 (MEDTQAIDWD…SRGPLTVEET (150 aa)) are interaction with CHEK2. The interval 2 to 220 (EDTQAIDWDV…PFAFNLNSDT (219 aa)) is interaction with the MRN complex. The residue at position 4 (Thr-4) is a Phosphothreonine; by ATM. In terms of domain architecture, FHA spans 54-105 (NVVGRMPDCSVALPFPSISKQHAEIEILAWDKAPILRDCGSLNGTQILRPPK). The residue at position 108 (Ser-108) is a Phosphoserine. The segment at 145-568 (LTVEETPRVQ…PAKLLVVSLE (424 aa)) is required for nuclear localization (NLS1). At Thr-146 the chain carries Phosphothreonine. Ser-168 is subject to Phosphoserine; by CK2. Ser-176 is subject to Phosphoserine. Disordered stretches follow at residues 185–248 (RTTS…AKQS), 261–280 (DQPL…GAGN), and 286–317 (GVIL…AEVH). Phosphoserine; by CK2 occurs at positions 196 and 218. Thr-220 bears the Phosphothreonine; by CK2 mark. Residues 261–274 (DQPLVKERDNDTKV) are compositionally biased toward basic and acidic residues. A Phosphoserine; by CK2 modification is found at Ser-299. At Thr-301 the chain carries Phosphothreonine; by CK2. Basic and acidic residues predominate over residues 306 to 317 (DSRPPGRPAEVH). The residue at position 329 (Ser-329) is a Phosphoserine; by CK2. Thr-331 is modified (phosphothreonine; by CK2). At Ser-372 the chain carries Phosphoserine. Ser-376 is modified (phosphoserine; by CK2). Thr-378 is subject to Phosphothreonine; by CK2. Ser-394 and Ser-397 each carry phosphoserine. Ser-402 carries the post-translational modification Phosphoserine; by CK2. Thr-404 carries the phosphothreonine; by CK2 modification. A Phosphoserine modification is found at Ser-411. Thr-449 carries the post-translational modification Phosphothreonine. Ser-453 carries the phosphoserine; by CK2 modification. Position 455 is a phosphothreonine; by CK2 (Thr-455). The interval 482-515 (RAHSEKDQPPFGDSDDSVEADKSSPGIHLERSQA) is disordered. 6 positions are modified to phosphoserine: Ser-485, Ser-495, Ser-498, Ser-504, Ser-505, and Ser-513. A Phosphothreonine modification is found at Thr-523. Residue Ser-590 is modified to Phosphoserine. Residue Lys-616 forms a Glycyl lysine isopeptide (Lys-Gly) (interchain with G-Cter in SUMO1); alternate linkage. Lys-616 participates in a covalent cross-link: Glycyl lysine isopeptide (Lys-Gly) (interchain with G-Cter in SUMO2); alternate. 2 disordered regions span residues 653-689 (DTLG…DNYG) and 780-1887 (SPPR…TKLN). The segment covering 671-685 (GREREQHVGGTKDSE) has biased composition (basic and acidic residues). Phosphoserine is present on residues Ser-780 and Ser-793. Residue Lys-812 is modified to N6-acetyllysine. Basic and acidic residues-rich tracts occupy residues 819-844 (ETAE…ERQT), 851-862 (ELTKGKQDREQK), 868-905 (DTQR…EKQV), and 914-951 (AFER…RGEP). A phosphoserine mark is found at Ser-955 and Ser-998. Polar residues predominate over residues 955-965 (SQDQKGQASSP). Residues 1016–1031 (KASRIRAAEKVSRGDQ) show a composition bias toward basic and acidic residues. Ser-1033 is subject to Phosphoserine. Over residues 1040–1051 (PTVPEAPAPPQK) the composition is skewed to pro residues. Ser-1068 and Ser-1086 each carry phosphoserine. Basic residues predominate over residues 1103–1113 (PKPKIRTRKSS). Positions 1129–1156 (PSTSTAQPVTPKPTSQATRSRTNRSSVK) are enriched in polar residues. The interaction with the PRKDC complex stretch occupies residues 1148 to 1610 (SRTNRSSVKT…TNRSSVKTPE (463 aa)). Thr-1157 bears the Phosphothreonine mark. The segment covering 1169–1187 (QPSTSTDQPVTSEPTSQVT) has biased composition (polar residues). A Phosphothreonine modification is found at Thr-1198. Over residues 1210–1228 (QPSTSTDRPVTSEPTSQAT) the composition is skewed to polar residues. Residue Ser-1235 is modified to Phosphoserine. At Thr-1239 the chain carries Phosphothreonine. The segment covering 1251–1268 (QPSTSTDQPVTSEPTYQA) has biased composition (polar residues). A phosphothreonine mark is found at Thr-1280 and Thr-1302. Low complexity-rich tracts occupy residues 1304 to 1318 (KPTS…NMSS) and 1347 to 1359 (TSRT…NMSS). Over residues 1375–1391 (PSTSTEQPVTPEPTSRA) the composition is skewed to polar residues. Ser-1399 and Ser-1400 each carry phosphoserine. At Lys-1402 the chain carries N6-acetyllysine. Position 1403 is a phosphothreonine (Thr-1403). Lys-1413 is covalently cross-linked (Glycyl lysine isopeptide (Lys-Gly) (interchain with G-Cter in SUMO1); alternate). Residue Lys-1413 forms a Glycyl lysine isopeptide (Lys-Gly) (interchain with G-Cter in SUMO2); alternate linkage. 4 stretches are compositionally biased toward polar residues: residues 1416-1444 (PSTS…SVKT), 1456-1475 (QPST…QATR), 1498-1514 (ASAS…TSRT), and 1538-1555 (QPST…TSRA). 2 positions are modified to phosphothreonine: Thr-1425 and Thr-1466. The residue at position 1548 (Thr-1548) is a Phosphothreonine. Ser-1564 bears the Phosphoserine mark. 2 positions are modified to phosphothreonine: Thr-1567 and Thr-1589. Residues 1579–1596 (QPSTSRNQLVTPEPTSRA) show a composition bias toward polar residues. At Ser-1604 the chain carries Phosphoserine. Thr-1608 carries the post-translational modification Phosphothreonine. Positions 1611–1620 (PVVPTAPEPH) are enriched in pro residues. Positions 1624-1636 (STDQPVTPKLTSR) are enriched in polar residues. Thr-1630, Thr-1664, and Thr-1671 each carry phosphothreonine. Residues 1678–1689 (GGQSKTLRSSTV) show a composition bias toward polar residues. Ser-1681 carries the phosphoserine modification. The residue at position 1697 (Thr-1697) is a Phosphothreonine. Residues 1698-1719 (PEFQSPVTTDQPISPEPITQPS) show a composition bias toward polar residues. The required for nuclear localization (NLS2) stretch occupies residues 1698 to 2089 (PEFQSPVTTD…VLSPLEMSST (392 aa)). Ser-1702 and Ser-1711 each carry phosphoserine. Lys-1740 is covalently cross-linked (Glycyl lysine isopeptide (Lys-Gly) (interchain with G-Cter in SUMO2)). Ser-1775 is modified (phosphoserine). Lys-1790 participates in a covalent cross-link: Glycyl lysine isopeptide (Lys-Gly) (interchain with G-Cter in SUMO2). Thr-1800 carries the post-translational modification Phosphothreonine. Residue Ser-1820 is modified to Phosphoserine. A compositionally biased stretch (polar residues) spans 1823 to 1836 (HQKQPQRGEVSQKT). Lys-1840 participates in a covalent cross-link: Glycyl lysine isopeptide (Lys-Gly) (interchain with G-Cter in SUMO1); alternate. A Glycyl lysine isopeptide (Lys-Gly) (interchain with G-Cter in SUMO2); alternate cross-link involves residue Lys-1840. Positions 1847 to 1857 (AEKPGKEEDVV) are enriched in basic and acidic residues. Residue Thr-1858 is modified to Phosphothreonine. 2 consecutive BRCT domains span residues 1892 to 1970 (APKV…EYVV) and 1991 to 2082 (RERR…FVLS). Arg-1943 bears the Omega-N-methylarginine mark.

In terms of assembly, homodimer. Interacts with H2AX, which requires phosphorylation of H2AX on 'Ser-139'. Interacts with the MRN complex, composed of MRE11, RAD50, and NBN. Interacts with CHEK2, which requires ATM-mediated phosphorylation of 'Thr-68' within the FHA domain of CHEK2. Interacts constitutively with the BRCA1-BARD1 complex, SMC1A and TP53BP1. Interacts with ATM and FANCD2, and these interactions are reduced upon DNA damage. Also interacts with the PRKDC complex, composed of XRCC6/KU70, XRCC5/KU80 and PRKDC/XRCC7. This interaction may be required for PRKDC autophosphorylation, which is essential for DNA double strand break (DSB) repair. When phosphorylated by ATM, interacts with RNF8 (via FHA domain). Interacts with CEP164. When phosphorylated, interacts with APTX (via FHA-like domain). Interacts (when phosphorylated) with TOPBP1; promoting TOPBP1 localization to DNA damage sites during mitosis. Interacts (when phosphorylated) with NBN; promoting NBN and MRN complex localization to DNA damage sites. In terms of processing, phosphorylated upon exposure to ionizing radiation (IR), ultraviolet radiation (UV), and hydroxyurea (HU). Phosphorylation in response to IR requires ATM, NBN, and possibly CHEK2. Also phosphorylated during the G2/M phase of the cell cycle and during activation of the mitotic spindle checkpoint. Phosphorylation at Thr-4 by ATM stabilizes and enhances homodimerization via the FHA domain. Phosphorylated at Ser-168 and Ser-196 by CK2 in response to DNA damage during mitosis, promoting interaction with TOPBP1. Phosphorylated by CK2 in response to DNA damage, promoting interaction with NBN and recruitment of the MRN complex to DNA damage sites. Sumoylation at Lys-1840 by PIAS4 following DNA damage promotes ubiquitin-mediated degradation. Post-translationally, ubiquitinated by RNF4, leading to proteasomal degradation; undergoes 'Lys-48'-linked polyubiquitination. Highly expressed in testis.

It is found in the nucleus. The protein resides in the chromosome. In terms of biological role, histone reader protein required for checkpoint-mediated cell cycle arrest in response to DNA damage within both the S phase and G2/M phases of the cell cycle. Specifically recognizes and binds histone H2AX phosphorylated at 'Ser-139', a marker of DNA damage, serving as a scaffold for the recruitment of DNA repair and signal transduction proteins to discrete foci of DNA damage sites. Also required for downstream events subsequent to the recruitment of these proteins. These include phosphorylation and activation of the ATM, CHEK1 and CHEK2 kinases, and stabilization of TP53/p53 and apoptosis. ATM and CHEK2 may also be activated independently by a parallel pathway mediated by TP53BP1. Required for chromosomal stability during mitosis by promoting recruitment of TOPBP1 to DNA double strand breaks (DSBs): TOPBP1 forms filamentous assemblies that bridge MDC1 and tether broken chromosomes during mitosis. Required for the repair of DSBs via homologous recombination by promoting recruitment of NBN component of the MRN complex to DSBs. The protein is Mediator of DNA damage checkpoint protein 1 of Homo sapiens (Human).